Here is a 1542-residue protein sequence, read N- to C-terminus: MWIERNLIASILLFSTSAYAAFKPRIVKKEFDDLLNPIYFNDSSTVLGLVDQTLLISNDDGKSWTNLQEVITPGEIDPLTIVNIEFNPSASKAFVFTASKHYLTLDKGSTWKEFQIPLEKYGNRIAYDVEFNFVNEEHAIIRTRSCKRRFDCKDEYFYSLDDLQSVDKITISDEIVNCQFSQSSTSSDSRKNDAITCVTRKLDSNRHFLESNVLTTLNFFKDVTSLPASDPLTKMLIKDIRVVQNYIVLFVSSDRYNKYSPTLLFISKDGNTFKEASLPDSEGTSPSVHFLKSPNPNLIRAIRLGKKNSLDGGGFYSEVLQSDSTGLHFHVLLDHLEANLLSYYQIENLANLEGIWIANQIDTSSKFGSKSVITFDAGLTWSPVTVDEDEDKSLHIIAFAGENSLYESKFPVSTPGIALRIGLIGDSSDALDIGSYRTFLTRDAGLTWSQVFDNVSVCGFGNYGNIILCCSYDPLLRSEPLKFRYSLDQGLNWESIDLGFNGVAVGVLNNIDNSSPQFLVMTIATDGKSSKAQHFLYSVDFSDAYEKKICDVTKDELFEEWTGRIDPVTKLPICVNGHKEKFRRRKADAECFSGELFQDLTPIEEPCDCDPDIDYECSLGFEFDAESNRCEPNLSILSSHYCVGKNLKRKVKVDRKSKVAGTKCKKDVKLKDNSFTLDCSKTSEPDLSEQRIVSTTISFEGSPVQYIYLKQGTNTTLLDETVILRTSLRTVYVSHNGGTTFDRVSIEDDVSFIDIYTNHYFPDNVYLITDTDELYVSDNRAISFQKVDMPSRAGLELGVRALTFHKSDPNKFIWFGEKDCNSIFDRSCQTQAYITEDNGLSFKPLLENVRSCYFVGTTFDSKLYDFDPNLIFCEQRVPNQRFLKLVASKDYFYDDKEELYPKIIGIATTMSFVIVATINEDNRSLKAFITADGSTFAEQLFPADLDFGREVAYTVIDNWESKTPNFFFHLTTSEDKDLEFGALLKSNYNGTTYTLAANNVNRNDRGYVDYEIVLNLNGIALINTVINSKELESEQSLETAKKLKTQITYNDGSEWVYLKPPTIDSEKNKFSCVKDKLSLEKCSLNLKGATDRPDSRDSISSGSAVGLLFGVGNVGEYLNQDSSGLALYFSKDAGISWKEIAKGDYMWEFGDQGTILVIVEFKKKVDTLKYSLDEGETWFDYKFANEKTYVLDLATVPSDTSRKFIILANRGEEGDHETVVHTIDFSKVHQRQCLLNLQDSNAGDDFEYWSPKNPSAVDGCMLGHEESYLKRIASHSDCFIGNAPLSEKYKVIKNCACTRRDYECDYNFALANDGTCKLVEGESPLDYSEVCRRDPTSIEYFLPTGYRKVGLSTCEGGLELDNWNPVPCPGKTREFNRKYGTGATGYKIVVIVAVPLLVLLSATWFLYEKGIKRNGGFARFGVIRLGEDDDDDLQMIEENNTDKVVNVVVKGLIHAFRAVFVSYLFFRKRAAKMFGGSSFSHRHILPQDEDAQAFLASDLESESGELFRYASDDDDAREIDSVIEGGIDVEDDDEENINFDSR.

An N-terminal signal peptide occupies residues 1 to 20; the sequence is MWIERNLIASILLFSTSAYA. The Lumenal segment spans residues 21 to 1387; it reads AFKPRIVKKE…KYGTGATGYK (1367 aa). The N-linked (GlcNAc...) asparagine glycan is linked to asparagine 41. BNR repeat units lie at residues 56 to 65, 102 to 112, 373 to 383, and 439 to 449; these read ISNDDGKSWT, YLTLDKGSTWK, ITFDAGLTWSP, and FLTRDAGLTWS. Residue asparagine 454 is glycosylated (N-linked (GlcNAc...) asparagine). The BNR 5 repeat unit spans residues 484–494; the sequence is RYSLDQGLNWE. N-linked (GlcNAc...) asparagine glycosylation is found at asparagine 633 and asparagine 714. One copy of the BNR 6 repeat lies at 732–742; it reads YVSHNGGTTFD. N-linked (GlcNAc...) asparagine glycosylation is found at asparagine 922 and asparagine 989. 2 BNR repeats span residues 1128–1138 and 1170–1178; these read YFSKDAGISWK and YSLDEGETW. The chain crosses the membrane as a helical span at residues 1388–1408; that stretch reads IVVIVAVPLLVLLSATWFLYE. The Cytoplasmic segment spans residues 1409 to 1445; that stretch reads KGIKRNGGFARFGVIRLGEDDDDDLQMIEENNTDKVV. A helical membrane pass occupies residues 1446–1466; sequence NVVVKGLIHAFRAVFVSYLFF. Topologically, residues 1467–1542 are lumenal; the sequence is RKRAAKMFGG…DEENINFDSR (76 aa).

This sequence belongs to the VPS10-related sortilin family.

The protein localises to the golgi apparatus. It localises to the trans-Golgi network membrane. The protein resides in the prevacuolar compartment membrane. Functionally, functions as a sorting receptor in the Golgi compartment required for the intracellular sorting and delivery of soluble vacuolar proteins, like carboxypeptidase Y (CPY) and proteinase A. Executes multiple rounds of sorting by cycling between the late Golgi and a prevacuolar endosome-like compartment. This chain is Vacuolar protein sorting/targeting protein 10 (VPS10), found in Komagataella phaffii (strain GS115 / ATCC 20864) (Yeast).